The following is a 627-amino-acid chain: Probable inactive L-type lectin-domain containing receptor kinase III.1 (627 aa).

Residues Met1–Ser23 form the signal peptide. Residues Gln24–Met303 are Extracellular-facing. Residues Glu26–Asn262 are legume-lectin like. N-linked (GlcNAc...) asparagine glycans are attached at residues Asn57, Asn78, Asn127, Asn184, Asn202, Asn209, and Asn230. The segment at Ile272–Lys297 is disordered. Pro residues predominate over residues Leu278–Pro292. N-linked (GlcNAc...) asparagine glycosylation is present at Asn300. Residues Leu304–Phe324 form a helical membrane-spanning segment. Topologically, residues Trp325–Val627 are cytoplasmic. The 271-residue stretch at Phe353–Leu623 folds into the Protein kinase domain. ATP contacts are provided by residues Leu359 to Phe367 and Lys381.

It in the C-terminal section; belongs to the protein kinase superfamily. Ser/Thr protein kinase family. In the N-terminal section; belongs to the leguminous lectin family.

It is found in the cell membrane. The protein is Probable inactive L-type lectin-domain containing receptor kinase III.1 (LECRK31) of Arabidopsis thaliana (Mouse-ear cress).